The primary structure comprises 430 residues: Serine--tRNA ligase (430 aa).

Residue 237-239 participates in L-serine binding; that stretch reads TAE. 268–270 contacts ATP; that stretch reads RSE. L-serine is bound at residue Glu-291. Residue 355–358 coordinates ATP; the sequence is EISS. Ser-391 is a binding site for L-serine.

The protein belongs to the class-II aminoacyl-tRNA synthetase family. Type-1 seryl-tRNA synthetase subfamily. As to quaternary structure, homodimer. The tRNA molecule binds across the dimer.

It is found in the cytoplasm. It carries out the reaction tRNA(Ser) + L-serine + ATP = L-seryl-tRNA(Ser) + AMP + diphosphate + H(+). It catalyses the reaction tRNA(Sec) + L-serine + ATP = L-seryl-tRNA(Sec) + AMP + diphosphate + H(+). It functions in the pathway aminoacyl-tRNA biosynthesis; selenocysteinyl-tRNA(Sec) biosynthesis; L-seryl-tRNA(Sec) from L-serine and tRNA(Sec): step 1/1. Its function is as follows. Catalyzes the attachment of serine to tRNA(Ser). Is also able to aminoacylate tRNA(Sec) with serine, to form the misacylated tRNA L-seryl-tRNA(Sec), which will be further converted into selenocysteinyl-tRNA(Sec). The protein is Serine--tRNA ligase of Yersinia pseudotuberculosis serotype O:1b (strain IP 31758).